The primary structure comprises 92 residues: Protein S100-A5 (92 aa).

2 EF-hand domains span residues 12–47 (MVTTFHKYSGREGSKLTLSRKELKELIKKELCLGEM) and 47–82 (MKESSIDDLMKSLDKNSDQEIDFKEYSVFLTMLCMA). Residues Thr28, Glu33, Asp60, Asn62, Asp64, Glu66, and Glu71 each coordinate Ca(2+).

It belongs to the S-100 family. In terms of assembly, homodimer.

Its function is as follows. Binds calcium, zinc and copper. One subunit can simultaneously bind 2 calcium ions or 2 copper ions plus 1 zinc ion. Calcium and copper ions compete for the same binding sites. The sequence is that of Protein S100-A5 (S100A5) from Homo sapiens (Human).